The following is a 327-amino-acid chain: GTPase Obg (327 aa).

One can recognise an Obg domain in the interval 2–160 (HILKDSLSIT…LNLRLELSLI (159 aa)). Positions 161-326 (ADIGLVGFPN…LVSELFALSR (166 aa)) constitute an OBG-type G domain. Residues 167 to 174 (GFPNAGKS), 192 to 196 (FTTRF), 213 to 216 (DVPG), 280 to 283 (NKLD), and 307 to 309 (SIY) contribute to the GTP site. Residues S174 and T194 each coordinate Mg(2+).

It belongs to the TRAFAC class OBG-HflX-like GTPase superfamily. OBG GTPase family. In terms of assembly, monomer. Requires Mg(2+) as cofactor.

It is found in the cytoplasm. An essential GTPase which binds GTP, GDP and possibly (p)ppGpp with moderate affinity, with high nucleotide exchange rates and a fairly low GTP hydrolysis rate. Plays a role in control of the cell cycle, stress response, ribosome biogenesis and in those bacteria that undergo differentiation, in morphogenesis control. The chain is GTPase Obg from Borrelia hermsii (strain HS1 / DAH).